The sequence spans 609 residues: UvrABC system protein C (609 aa).

In terms of domain architecture, GIY-YIG spans 15–92; sequence TGSGVYQMQD…IKQFRPRYNV (78 aa). In terms of domain architecture, UVR spans 202 to 237; it reads DQVIIKLTERMEVASENLVFEEAAHYRDQIRQLRRL.

The protein belongs to the UvrC family. In terms of assembly, interacts with UvrB in an incision complex.

Its subcellular location is the cytoplasm. The UvrABC repair system catalyzes the recognition and processing of DNA lesions. UvrC both incises the 5' and 3' sides of the lesion. The N-terminal half is responsible for the 3' incision and the C-terminal half is responsible for the 5' incision. The protein is UvrABC system protein C of Coxiella burnetii (strain CbuK_Q154) (Coxiella burnetii (strain Q154)).